The following is a 481-amino-acid chain: Zygotic gap protein knirps (481 aa).

Positions 2-78 (NQTCKVCGEP…VGMSKGGSRY (77 aa)) form a DNA-binding region, nuclear receptor. 2 NR C4-type zinc fingers span residues 5-25 (CKVCGEPAAGFHFGAFTCEGC) and 42-66 (CKNDGKCIIDKKNRTTCKACRLRKC). Low complexity-rich tracts occupy residues 100-111 (AAAGKAPGHATG), 127-148 (QQQQQQHQQQQQQQHQHQQQQQ), 245-264 (TPPTVATVPQQSQPQPAASP), 316-335 (SHSSSASPTPSKSQSSSPLS), and 420-440 (TTNSCSSSTSTSSSNSSTSST). Disordered regions lie at residues 100–161 (AAAG…GYTG), 231–294 (SVDS…PHTI), 308–336 (LLPGLTTASHSSSASPTPSKSQSSSPLSF), and 420–442 (TTNSCSSSTSTSSSNSSTSSTEA).

The protein belongs to the nuclear hormone receptor family. NR0 subfamily.

It localises to the nucleus. Its function is as follows. Transcriptional repressor. Binds to multiple sites in the eve stripe 3 enhancer element. Plays an essential role in the segmentation process both by refining the expression patterns of gap genes and by establishing pair-rules stripes of gene expression. In Drosophila virilis (Fruit fly), this protein is Zygotic gap protein knirps (kni).